Reading from the N-terminus, the 244-residue chain is MSNSLIFKSQMAQLNTVLIEERNLEVLYEQLTEKLAKAPEGFFKGAAMVAHLKAVDNVDLSWLMHLKTVFQKHHLLLVGVTQHPFDSETLFRAGLIDVPFLEPKSAKLEGEEEIKSVDLNEEIESSSPHFLSGAAHRKTLTVRHHVRSGQRIYAHGGDLVVIGTVNAGAEILADGNIHVLGTLRGKAFAGIKNNEDAHIFCLEMAAEIISIAGIYQNLEKNAHTTKNNCLITLNSDETMQITPL.

This sequence belongs to the MinC family. In terms of assembly, interacts with MinD and FtsZ.

Cell division inhibitor that blocks the formation of polar Z ring septums. Rapidly oscillates between the poles of the cell to destabilize FtsZ filaments that have formed before they mature into polar Z rings. Prevents FtsZ polymerization. This Dichelobacter nodosus (strain VCS1703A) protein is Probable septum site-determining protein MinC.